We begin with the raw amino-acid sequence, 281 residues long: Undecaprenyl-diphosphatase 1 (281 aa).

Transmembrane regions (helical) follow at residues Trp-95–Ile-115, Phe-119–Ala-139, Leu-152–Val-172, Phe-195–Ala-215, Leu-227–Leu-247, and Phe-256–Thr-276.

This sequence belongs to the UppP family.

Its subcellular location is the cell membrane. It catalyses the reaction di-trans,octa-cis-undecaprenyl diphosphate + H2O = di-trans,octa-cis-undecaprenyl phosphate + phosphate + H(+). Catalyzes the dephosphorylation of undecaprenyl diphosphate (UPP). Confers resistance to bacitracin. This is Undecaprenyl-diphosphatase 1 from Corynebacterium jeikeium (strain K411).